Reading from the N-terminus, the 465-residue chain is Ribulose bisphosphate carboxylase large chain (465 aa).

Lys-4 bears the N6,N6,N6-trimethyllysine mark. The substrate site is built by Asn-113 and Thr-163. Lys-165 serves as the catalytic Proton acceptor. Residue Lys-167 coordinates substrate. The Mg(2+) site is built by Lys-191, Asp-193, and Glu-194. An N6-carboxylysine modification is found at Lys-191. Residue His-284 is the Proton acceptor of the active site. Residues Arg-285, His-317, and Ser-369 each coordinate substrate.

It belongs to the RuBisCO large chain family. Type I subfamily. In terms of assembly, heterohexadecamer of 8 large chains and 8 small chains; disulfide-linked. The disulfide link is formed within the large subunit homodimers. Mg(2+) serves as cofactor. Post-translationally, the disulfide bond which can form in the large chain dimeric partners within the hexadecamer appears to be associated with oxidative stress and protein turnover.

Its subcellular location is the plastid. It is found in the chloroplast. It catalyses the reaction 2 (2R)-3-phosphoglycerate + 2 H(+) = D-ribulose 1,5-bisphosphate + CO2 + H2O. It carries out the reaction D-ribulose 1,5-bisphosphate + O2 = 2-phosphoglycolate + (2R)-3-phosphoglycerate + 2 H(+). RuBisCO catalyzes two reactions: the carboxylation of D-ribulose 1,5-bisphosphate, the primary event in carbon dioxide fixation, as well as the oxidative fragmentation of the pentose substrate in the photorespiration process. Both reactions occur simultaneously and in competition at the same active site. This is Ribulose bisphosphate carboxylase large chain from Eucommia ulmoides (Hardy rubber tree).